We begin with the raw amino-acid sequence, 420 residues long: Protein disulfide isomerase Creld1 (420 aa).

The signal sequence occupies residues Met1 to Leu29. Over Gln30–Glu362 the chain is Extracellular. The CXXC signature appears at Cys46–Cys49. 4 disulfides stabilise this stretch: Cys46–Cys49, Cys155–Cys169, Cys163–Cys181, and Cys183–Cys192. One can recognise an EGF-like 1 domain in the interval Leu153–Gly193. Asn205 carries an N-linked (GlcNAc...) asparagine glycan. 2 FU repeats span residues His208–Thr255 and Ser268–Pro315. The CXXC motif lies at Cys278 to Cys281. 4 disulfide bridges follow: Cys278–Cys281, Cys309–Cys321, Cys314–Cys330, and Cys332–Cys343. Positions Asp305–Ile342 constitute an EGF-like 2; calcium-binding domain. The helical transmembrane segment at Met363–Ala383 threads the bilayer. Lys384 is a topological domain (cytoplasmic). The helical transmembrane segment at Gly385–Leu405 threads the bilayer. The Extracellular portion of the chain corresponds to Ser406 to Arg420.

This sequence belongs to the CRELD family. In terms of tissue distribution, expressed in myoblast C2C12 cells (at protein level).

The protein localises to the membrane. The catalysed reaction is Catalyzes the rearrangement of -S-S- bonds in proteins.. Protein disulfide isomerase. Promotes the localization of acetylcholine receptors (AChRs) to the plasma membrane. This Mus musculus (Mouse) protein is Protein disulfide isomerase Creld1 (Creld1).